The following is a 792-amino-acid chain: Kinesin-like protein KIF3C (792 aa).

The Kinesin motor domain maps to 10–363 (ALKVVARCRP…LRFANRAKNI (354 aa)). 97–104 (GQTGTGKT) lines the ATP pocket. 3 disordered regions span residues 249–287 (GSER…RPKE), 397–418 (MLGK…APAG), and 749–792 (RPST…LDHE). Over residues 257-268 (GPNTTGGTATQP) the composition is skewed to low complexity. Residues 269–282 (TGGGGGGGGGGGGG) are compositionally biased toward gly residues. The stretch at 374 to 627 (KDTLLREFQE…QNEQTRELKL (254 aa)) forms a coiled coil. The segment covering 397–412 (MLGKRLRRKSSRRKKA) has biased composition (basic residues). The globular stretch occupies residues 628 to 792 (KYLIIENFIP…LRPTTVLDHE (165 aa)). The span at 773 to 792 (AHASLAASAALRPTTVLDHE) shows a compositional bias: low complexity.

It belongs to the TRAFAC class myosin-kinesin ATPase superfamily. Kinesin family. Kinesin II subfamily. Heterodimer of KIF3A and KIF3C.

It is found in the cytoplasm. It localises to the cytoskeleton. In terms of biological role, microtubule-based anterograde translocator for membranous organelles. The sequence is that of Kinesin-like protein KIF3C (KIF3C) from Bos taurus (Bovine).